We begin with the raw amino-acid sequence, 497 residues long: Serine hydroxymethyltransferase (497 aa).

(6S)-5,6,7,8-tetrahydrofolate contacts are provided by residues leucine 176 and 180-182 (GHL). Residue lysine 289 is modified to N6-(pyridoxal phosphate)lysine.

It belongs to the SHMT family. As to quaternary structure, homodimer. Pyridoxal 5'-phosphate is required as a cofactor.

It localises to the cytoplasm. It carries out the reaction (6R)-5,10-methylene-5,6,7,8-tetrahydrofolate + glycine + H2O = (6S)-5,6,7,8-tetrahydrofolate + L-serine. The protein operates within one-carbon metabolism; tetrahydrofolate interconversion. It functions in the pathway amino-acid biosynthesis; glycine biosynthesis; glycine from L-serine: step 1/1. Its function is as follows. Catalyzes the reversible interconversion of serine and glycine with tetrahydrofolate (THF) serving as the one-carbon carrier. This reaction serves as the major source of one-carbon groups required for the biosynthesis of purines, thymidylate, methionine, and other important biomolecules. Also exhibits THF-independent aldolase activity toward beta-hydroxyamino acids, producing glycine and aldehydes, via a retro-aldol mechanism. This chain is Serine hydroxymethyltransferase, found in Chlamydia muridarum (strain MoPn / Nigg).